We begin with the raw amino-acid sequence, 197 residues long: Probable UbiX-like flavin prenyltransferase (197 aa).

FMN contacts are provided by residues 9-11, S36, 87-90, and R122; these read GAT and SMKT.

It belongs to the UbiX/PAD1 family. YclB subfamily. In terms of assembly, homododecamer.

The catalysed reaction is dimethylallyl phosphate + FMNH2 = prenylated FMNH2 + phosphate. In terms of biological role, flavin prenyltransferase that catalyzes the synthesis of the prenylated FMN cofactor (prenyl-FMN) for phenolic acid decarboxylase C. Involved in the decarboxylation and detoxification of phenolic derivatives under both aerobic and anaerobic conditions. The polypeptide is Probable UbiX-like flavin prenyltransferase (ecdB) (Escherichia coli).